Consider the following 302-residue polypeptide: NAD kinase 2 (302 aa).

Residue D79 is the Proton acceptor of the active site. Residues 79–80 (DG), 153–154 (NE), D183, 194–199 (TAYSLS), A218, and N252 contribute to the NAD(+) site.

It belongs to the NAD kinase family. The cofactor is a divalent metal cation.

Its subcellular location is the cytoplasm. It carries out the reaction NAD(+) + ATP = ADP + NADP(+) + H(+). Functionally, involved in the regulation of the intracellular balance of NAD and NADP, and is a key enzyme in the biosynthesis of NADP. Catalyzes specifically the phosphorylation on 2'-hydroxyl of the adenosine moiety of NAD to yield NADP. This is NAD kinase 2 from Prochlorococcus marinus subsp. pastoris (strain CCMP1986 / NIES-2087 / MED4).